A 511-amino-acid chain; its full sequence is ATP synthase subunit beta, mitochondrial (511 aa).

The N-terminal 33 residues, 1-33 (MVLPRLYTATSRAAFKAAKQSAPLLSTSWKRCM), are a transit peptide targeting the mitochondrion. Residue T112 is modified to Phosphothreonine. 190 to 197 (GGAGVGKT) contacts ATP. T237 is modified (phosphothreonine). S373 is modified (phosphoserine).

The protein belongs to the ATPase alpha/beta chains family. In terms of assembly, F-type ATPases have 2 components, CF(1) - the catalytic core - and CF(0) - the membrane proton channel. CF(1) has five subunits: alpha(3), beta(3), gamma(1), delta(1), epsilon(1). CF(0) has three main subunits: a, b and c.

It is found in the mitochondrion. The protein resides in the mitochondrion inner membrane. It carries out the reaction ATP + H2O + 4 H(+)(in) = ADP + phosphate + 5 H(+)(out). Mitochondrial membrane ATP synthase (F(1)F(0) ATP synthase or Complex V) produces ATP from ADP in the presence of a proton gradient across the membrane which is generated by electron transport complexes of the respiratory chain. F-type ATPases consist of two structural domains, F(1) - containing the extramembraneous catalytic core, and F(0) - containing the membrane proton channel, linked together by a central stalk and a peripheral stalk. During catalysis, ATP synthesis in the catalytic domain of F(1) is coupled via a rotary mechanism of the central stalk subunits to proton translocation. Subunits alpha and beta form the catalytic core in F(1). Rotation of the central stalk against the surrounding alpha(3)beta(3) subunits leads to hydrolysis of ATP in three separate catalytic sites on the beta subunits. This chain is ATP synthase subunit beta, mitochondrial (ATP2), found in Saccharomyces cerevisiae (strain ATCC 204508 / S288c) (Baker's yeast).